The sequence spans 146 residues: Hut operon positive regulatory protein (146 aa).

The protein belongs to the HutP family. In terms of assembly, homohexamer.

Functionally, antiterminator that binds to cis-acting regulatory sequences on the mRNA in the presence of histidine, thereby suppressing transcription termination and activating the hut operon for histidine utilization. In Bacillus anthracis (strain CDC 684 / NRRL 3495), this protein is Hut operon positive regulatory protein.